A 76-amino-acid polypeptide reads, in one-letter code: Small ribosomal subunit protein uS17 (76 aa).

Belongs to the universal ribosomal protein uS17 family. As to quaternary structure, part of the 30S ribosomal subunit.

Its function is as follows. One of the primary rRNA binding proteins, it binds specifically to the 5'-end of 16S ribosomal RNA. This chain is Small ribosomal subunit protein uS17, found in Dinoroseobacter shibae (strain DSM 16493 / NCIMB 14021 / DFL 12).